A 243-amino-acid chain; its full sequence is Carboxy-S-adenosyl-L-methionine synthase (243 aa).

Residues Tyr35, 68–70, 92–93, and Arg199 contribute to the S-adenosyl-L-methionine site; these read GCS and DN.

This sequence belongs to the class I-like SAM-binding methyltransferase superfamily. Cx-SAM synthase family. In terms of assembly, homodimer.

The enzyme catalyses prephenate + S-adenosyl-L-methionine = carboxy-S-adenosyl-L-methionine + 3-phenylpyruvate + H2O. Its function is as follows. Catalyzes the conversion of S-adenosyl-L-methionine (SAM) to carboxy-S-adenosyl-L-methionine (Cx-SAM). The chain is Carboxy-S-adenosyl-L-methionine synthase from Helicobacter pylori (strain P12).